Consider the following 282-residue polypeptide: HTH-type transcriptional activator RhaR (282 aa).

In terms of domain architecture, HTH araC/xylS-type spans 179-277 (DKLITRLAAS…GMTPSQWRHL (99 aa)). 2 consecutive DNA-binding regions (H-T-H motif) follow at residues 196-217 (DKFC…RQQT) and 244-267 (ISDI…TRET).

Binds DNA as a dimer.

Its subcellular location is the cytoplasm. Its function is as follows. Activates expression of the rhaSR operon in response to L-rhamnose. The chain is HTH-type transcriptional activator RhaR from Escherichia coli (strain K12 / MC4100 / BW2952).